Here is a 418-residue protein sequence, read N- to C-terminus: Nuclear hormone receptor 114 (418 aa).

The nuclear receptor DNA-binding region spans 12–87 (DHVCLVCQDF…VGMDRNALQQ (76 aa)). NR C4-type zinc fingers lie at residues 15-35 (CLVC…CVGC) and 51-70 (CQFE…CRYC). The disordered stretch occupies residues 89–130 (RDPIGYTKRTRRPKKELKTTSDCSSDEGASTPPSVSPLQLSP). In terms of domain architecture, NR LBD spans 170–409 (PIRSLHEALC…AFARQLFFGD (240 aa)). An AF-2 region spans residues 398 to 409 (FSAFARQLFFGD).

It belongs to the nuclear hormone receptor family. In terms of tissue distribution, expressed in germ and intestinal cells and at low levels in the hypodermis.

It localises to the nucleus. In terms of biological role, probable transcription factor which may have a role in detoxifying dietary metabolites arising from bacterial tryptophan metabolism. Required for fertility and involved in proper postembryonic germline development, especially germline stem cell (GSC) proliferation. Required for activation of the methionine/S-adenosylmethionine (Met/SAM) cycle in response to low levels of SAM. This Caenorhabditis elegans protein is Nuclear hormone receptor 114.